The primary structure comprises 624 residues: NADPH-dependent diflavin oxidoreductase 1 (624 aa).

In terms of domain architecture, Flavodoxin-like spans 6 to 168 (IVILYGSETG…VYYEFEKRII (163 aa)). Residues 12-17 (SETGNA), 59-62 (STTG), 106-115 (LGDSSYPRFN), and Glu-142 contribute to the FMN site. Positions 226–474 (ETIRHGTVKK…LQNNHLLHED (249 aa)) constitute an FAD-binding FR-type domain. FAD is bound by residues Arg-384, 414-417 (RFYS), and 446-449 (GLCT). NADP(+)-binding positions include 539-540 (SR) and 548-552 (AKYVQ). Trp-624 lines the FAD pocket.

Belongs to the NADPH-dependent diflavin oxidoreductase NDOR1 family. The protein in the N-terminal section; belongs to the flavodoxin family. This sequence in the C-terminal section; belongs to the flavoprotein pyridine nucleotide cytochrome reductase family. As to quaternary structure, interacts with DRE2; as part of the cytosolic iron-sulfur (Fe-S) protein assembly (CIA) machinery. FAD is required as a cofactor. Requires FMN as cofactor.

It localises to the cytoplasm. Its subcellular location is the mitochondrion. The catalysed reaction is 2 oxidized [2Fe-2S]-[protein] + NADPH = 2 reduced [2Fe-2S]-[protein] + NADP(+) + H(+). Its function is as follows. NADPH-dependent reductase which is a central component of the cytosolic iron-sulfur (Fe-S) protein assembly (CIA) machinery. Transfers electrons from NADPH via its FAD and FMN prosthetic groups to the [2Fe-2S] cluster of DRE2, another key component of the CIA machinery. In turn, this reduced cluster provides electrons for assembly of cytosolic iron-sulfur cluster proteins. Positively controls H(2)O(2)-induced cell death. The sequence is that of NADPH-dependent diflavin oxidoreductase 1 from Kluyveromyces lactis (strain ATCC 8585 / CBS 2359 / DSM 70799 / NBRC 1267 / NRRL Y-1140 / WM37) (Yeast).